We begin with the raw amino-acid sequence, 72 residues long: Translation initiation factor IF-1 (72 aa).

The S1-like domain occupies 2-72; that stretch reads AKEDCIEMQG…SKGRIIFRSR (71 aa).

It belongs to the IF-1 family. As to quaternary structure, component of the 30S ribosomal translation pre-initiation complex which assembles on the 30S ribosome in the order IF-2 and IF-3, IF-1 and N-formylmethionyl-tRNA(fMet); mRNA recruitment can occur at any time during PIC assembly.

Its subcellular location is the cytoplasm. Functionally, one of the essential components for the initiation of protein synthesis. Stabilizes the binding of IF-2 and IF-3 on the 30S subunit to which N-formylmethionyl-tRNA(fMet) subsequently binds. Helps modulate mRNA selection, yielding the 30S pre-initiation complex (PIC). Upon addition of the 50S ribosomal subunit IF-1, IF-2 and IF-3 are released leaving the mature 70S translation initiation complex. In Haemophilus influenzae (strain ATCC 51907 / DSM 11121 / KW20 / Rd), this protein is Translation initiation factor IF-1.